Here is a 288-residue protein sequence, read N- to C-terminus: Pantothenate synthetase (288 aa).

30 to 37 is an ATP binding site; it reads MGNLHNGH. Residue H37 is the Proton donor of the active site. Residue Q61 participates in (R)-pantoate binding. Position 61 (Q61) interacts with beta-alanine. 149 to 152 contributes to the ATP binding site; it reads GQKD. Q155 serves as a coordination point for (R)-pantoate. ATP is bound by residues V178 and 186–189; that span reads LSSR.

It belongs to the pantothenate synthetase family. In terms of assembly, homodimer.

It is found in the cytoplasm. The enzyme catalyses (R)-pantoate + beta-alanine + ATP = (R)-pantothenate + AMP + diphosphate + H(+). The protein operates within cofactor biosynthesis; (R)-pantothenate biosynthesis; (R)-pantothenate from (R)-pantoate and beta-alanine: step 1/1. In terms of biological role, catalyzes the condensation of pantoate with beta-alanine in an ATP-dependent reaction via a pantoyl-adenylate intermediate. The sequence is that of Pantothenate synthetase from Tolumonas auensis (strain DSM 9187 / NBRC 110442 / TA 4).